Consider the following 555-residue polypeptide: Probable Xaa-Pro aminopeptidase BC1G_13431 (555 aa).

Mn(2+) is bound by residues Asp-303, Asp-314, Glu-458, and Glu-499. The disordered stretch occupies residues 527–555 (EGKEQEEEEEREANRKATESRKQKKTWFW). Over residues 538–547 (EANRKATESR) the composition is skewed to basic and acidic residues.

Belongs to the peptidase M24B family. The cofactor is Mn(2+).

The enzyme catalyses Release of any N-terminal amino acid, including proline, that is linked to proline, even from a dipeptide or tripeptide.. In terms of biological role, catalyzes the removal of a penultimate prolyl residue from the N-termini of peptides. The chain is Probable Xaa-Pro aminopeptidase BC1G_13431 from Botryotinia fuckeliana (strain B05.10) (Noble rot fungus).